A 183-amino-acid polypeptide reads, in one-letter code: Large ribosomal subunit protein eL18 (183 aa).

Residues 146-183 are disordered; it reads HFGPAPGVPHSHTKPYVRSKGRKFEKARGRRKSRGFRV. 2 stretches are compositionally biased toward basic residues: residues 156–166 and 173–183; these read SHTKPYVRSKG and RGRRKSRGFRV.

Belongs to the eukaryotic ribosomal protein eL18 family.

The polypeptide is Large ribosomal subunit protein eL18 (RPL18) (Cicer arietinum (Chickpea)).